Here is a 229-residue protein sequence, read N- to C-terminus: Urease accessory protein UreF (229 aa).

It belongs to the UreF family. UreD, UreF and UreG form a complex that acts as a GTP-hydrolysis-dependent molecular chaperone, activating the urease apoprotein by helping to assemble the nickel containing metallocenter of UreC. The UreE protein probably delivers the nickel.

Its subcellular location is the cytoplasm. Functionally, required for maturation of urease via the functional incorporation of the urease nickel metallocenter. The polypeptide is Urease accessory protein UreF (Staphylococcus epidermidis (strain ATCC 12228 / FDA PCI 1200)).